The sequence spans 39 residues: Photosystem II reaction center protein L (39 aa).

Residues 16–37 (RTSLYLGLLLVAVLGILFSSYF) form a helical membrane-spanning segment.

It belongs to the PsbL family. In terms of assembly, PSII is composed of 1 copy each of membrane proteins PsbA, PsbB, PsbC, PsbD, PsbE, PsbF, PsbH, PsbI, PsbJ, PsbK, PsbL, PsbM, PsbT, PsbX, PsbY, PsbZ, Psb30/Ycf12, peripheral proteins PsbO, CyanoQ (PsbQ), PsbU, PsbV and a large number of cofactors. It forms dimeric complexes.

The protein localises to the cellular thylakoid membrane. In terms of biological role, one of the components of the core complex of photosystem II (PSII). PSII is a light-driven water:plastoquinone oxidoreductase that uses light energy to abstract electrons from H(2)O, generating O(2) and a proton gradient subsequently used for ATP formation. It consists of a core antenna complex that captures photons, and an electron transfer chain that converts photonic excitation into a charge separation. This subunit is found at the monomer-monomer interface and is required for correct PSII assembly and/or dimerization. Required for PSII activity, at least in part due to its effects on PSII assembly. May make specific contact(s) with lipids. The sequence is that of Photosystem II reaction center protein L from Synechocystis sp. (strain ATCC 27184 / PCC 6803 / Kazusa).